Here is a 319-residue protein sequence, read N- to C-terminus: Zinc metalloproteinase/disintegrin (319 aa).

The propeptide occupies 1–28 (EDEAPKMCGVTQNWESYEPIKKASQSNL). A Peptidase M12B domain is found at 34–230 (RYIELVIVAD…QKPQCILNKP (197 aa)). Ca(2+) contacts are provided by glutamate 37 and aspartate 121. Intrachain disulfides connect cysteine 145–cysteine 225, cysteine 185–cysteine 209, and cysteine 187–cysteine 192. Histidine 170 lines the Zn(2+) pocket. Glutamate 171 is a catalytic residue. Zn(2+) contacts are provided by histidine 174 and histidine 180. The Ca(2+) site is built by cysteine 225 and asparagine 228. Positions 231–246 (LRTDTVSTPVSGNELL) are excised as a propeptide. The Disintegrin domain occupies 238–319 (TPVSGNELLE…AGCPRNPFHA (82 aa)). Cystine bridges form between cysteine 252/cysteine 267, cysteine 254/cysteine 262, cysteine 261/cysteine 284, cysteine 275/cysteine 281, cysteine 280/cysteine 305, and cysteine 293/cysteine 312. The Cell attachment site motif lies at 297 to 299 (RGD).

It belongs to the venom metalloproteinase (M12B) family. P-II subfamily. P-IIa sub-subfamily. In terms of assembly, monomer. The cofactor is Zn(2+). Expressed by the venom gland.

The protein localises to the secreted. Excess of calcium ions significantly suppress the autoproteolysis of the enzyme. Metalloproteinase that impairs hemostasis in the envenomed animal. Shows autoproteolysis dependent on pH and temperature. Does not show hemorrhagic activity. In terms of biological role, inhibits platelet aggregation induced by ADP (IC(50) is 200 nM), collagen (IC(50) is 500 nM), thrombin and epinephrin (IC(50) is 300 nM). Does not inhibit aggregation induced by ristocetin. Functionally, inhibits platelet aggregation induced by ADP (IC(50) is 100 nM), collagen (IC(50) is 500 nM), thrombin and epinephrin (IC(50) is 300 nM). Does not inhibit aggregation induced by ristocetin. Significantly inhibits angiogenesis both in vivo and in vitro. This chain is Zinc metalloproteinase/disintegrin, found in Gloydius brevicauda (Korean slamosa snake).